Reading from the N-terminus, the 538-residue chain is Chaperonin GroEL (538 aa).

ATP contacts are provided by residues 29-32 (TIGP), 86-90 (DGTTT), G413, 476-478 (NAA), and D492.

Belongs to the chaperonin (HSP60) family. Forms a cylinder of 14 subunits composed of two heptameric rings stacked back-to-back. Interacts with the co-chaperonin GroES.

The protein localises to the cytoplasm. The enzyme catalyses ATP + H2O + a folded polypeptide = ADP + phosphate + an unfolded polypeptide.. Functionally, together with its co-chaperonin GroES, plays an essential role in assisting protein folding. The GroEL-GroES system forms a nano-cage that allows encapsulation of the non-native substrate proteins and provides a physical environment optimized to promote and accelerate protein folding. The protein is Chaperonin GroEL of Staphylococcus aureus (strain bovine RF122 / ET3-1).